The sequence spans 77 residues: Protein OPG195 (77 aa).

A signal peptide spans 1–17; that stretch reads MRSLIIVLLFPSIIYSM.

The protein belongs to the chordopoxvirinae B9 protein family.

The protein is Protein OPG195 (OPG197) of Homo sapiens (Human).